A 116-amino-acid chain; its full sequence is MTNKELQAIRKLLMLDVSEAAEHIGRVSARSWQYWESGRSAVPDDVEQEMLDLASVRIEMMSAIDKRLADGERPKLRFYNKLDEYLADNPDHNVIGWRLSQSVAALYYTEGHADLI.

Y34 is a binding site for DNA. H92 is a binding site for Mg(2+).

As to quaternary structure, homodimer.

Represses the expression of the acrIF8-aca2 operon. Regulates the transcription and translation of phage anti-CRISPR acrIF8 gene (AC H9C181), which is necessary because the expression of this gene rises rapidely upon infection to enable evasion from host CRISPR-Cas defense but is probably toxic to the host cell. Aca2 repressor can inhibit acrIF8 transcriptionally through DNA binding to 2 inverted repeats in the promoter region and translationally by binding conserved RNA stem-loops on mRNAs thereby blocking ribosome access. Both modes of regulation together are essential for complete tight repression. The chain is Aca2 repressor from Pectobacterium carotovorum (Erwinia carotovora).